We begin with the raw amino-acid sequence, 859 residues long: Heterogeneous nuclear ribonucleoprotein U-like protein 1 (859 aa).

The segment at 1–103 is necessary for interaction with HRMT1L1; sequence MDVRRLKVNE…GPDGHYVMDN (103 aa). Residues 3 to 37 enclose the SAP domain; that stretch reads VRRLKVNELREELQRRGLDTRGLKAELAERLLAAL. Residues 36–131 are disordered; that stretch reads ALEAEEPEDE…SSYDRRPLDM (96 aa). The segment covering 38 to 54 has biased composition (acidic residues); sequence EAEEPEDERELEADDDP. A compositionally biased stretch (pro residues) spans 77–88; sequence QPPPPGLQPHPE. Lysine 117 is covalently cross-linked (Glycyl lysine isopeptide (Lys-Gly) (interchain with G-Cter in SUMO1); alternate). Lysine 117 is covalently cross-linked (Glycyl lysine isopeptide (Lys-Gly) (interchain with G-Cter in SUMO2); alternate). Residues 118–130 show a composition bias toward basic and acidic residues; it reads QENESSYDRRPLD. Lysine 143 participates in a covalent cross-link: Glycyl lysine isopeptide (Lys-Gly) (interchain with G-Cter in SUMO1); alternate. Lysine 143 is covalently cross-linked (Glycyl lysine isopeptide (Lys-Gly) (interchain with G-Cter in SUMO2); alternate). Residues 146 to 206 form a disordered region; sequence MKQEAPPSFL…QPPAEEDEDD (61 aa). Glycyl lysine isopeptide (Lys-Gly) (interchain with G-Cter in SUMO2) cross-links involve residues lysine 147 and lysine 163. Over residues 174-193 the composition is skewed to basic and acidic residues; it reads RPFEENRGRGYFEHREDRRG. In terms of domain architecture, B30.2/SPRY spans 192 to 389; it reads RGRSPQPPAE…VEFNFGQRAE (198 aa). Serine 195 carries the phosphoserine modification. The residue at position 210 (threonine 210) is a Phosphothreonine. The segment at 214 to 859 is necessary for interaction with TP53; sequence IDTYNCDLHF…GSTQGGTSTQ (646 aa). Glycyl lysine isopeptide (Lys-Gly) (interchain with G-Cter in SUMO2) cross-links involve residues lysine 271 and lysine 450. Residues 457 to 595 form a necessary for interaction with BRD7 and transcriptional activation region; it reads NAIMDKMRVM…EEADKLVRQY (139 aa). A Phosphoserine modification is found at serine 513. Residue lysine 540 forms a Glycyl lysine isopeptide (Lys-Gly) (interchain with G-Cter in SUMO2) linkage. Over residues 595-612 the composition is skewed to basic and acidic residues; that stretch reads YNEEGRKAGPPPEKRFDS. The segment at 595 to 814 is disordered; sequence YNEEGRKAGP…PPTAQTYPQP (220 aa). Repeat copies occupy residues 613-615, 620-622, 639-641, 645-647, and 659-661. Gly residues-rich tracts occupy residues 613–626 and 634–670; these read RGGGFRGRGGGGGF and PPGGNRGGFQNRGGGGGSGGGGGNYRGGFNRSGGGGY. Positions 613–661 are 5 X 3 AA repeats of R-G-G; it reads RGGGFRGRGGGGGFQRYDNRGPPGGNRGGFQNRGGGGGSGGGGGNYRGG. A necessary for transcription repression region spans residues 613–661; the sequence is RGGGFRGRGGGGGFQRYDNRGPPGGNRGGFQNRGGGGGSGGGGGNYRGG. Residue arginine 639 is modified to Asymmetric dimethylarginine. Arginine 645 and arginine 659 each carry asymmetric dimethylarginine; alternate. An omega-N-methylarginine; alternate mark is found at arginine 645 and arginine 659. Arginine 664 and arginine 674 each carry omega-N-methylarginine. A compositionally biased stretch (low complexity) spans 671-696; the sequence is NQNRWGNNNRDNNNSNNRGNYNRAPQ. The segment covering 697–720 has biased composition (pro residues); that stretch reads QQPPPQQPPPPQPPPQQPPPPPSY. Serine 721 carries the phosphoserine modification. The span at 728-744 shows a compositional bias: polar residues; that stretch reads GASSYNKNSNIPGSSAN. Low complexity predominate over residues 745–775; it reads TSTPTVSSYTPPQPSYSQPPYNQGGYTQGYT. 2 stretches are compositionally biased toward pro residues: residues 776–786 and 796–807; these read APPPPPPPPPA and NPAPYTPPPPPT.

In terms of assembly, interacts with BRD7, PRMT2, TP53 and NXF1. Associates with histones and BRD7. Post-translationally, methylated.

Its subcellular location is the nucleus. In terms of biological role, acts as a basic transcriptional regulator. Represses basic transcription driven by several virus and cellular promoters. When associated with BRD7, activates transcription of glucocorticoid-responsive promoter in the absence of ligand-stimulation. Also plays a role in mRNA processing and transport. Binds avidly to poly(G) and poly(C) RNA homopolymers in vitro. This is Heterogeneous nuclear ribonucleoprotein U-like protein 1 (Hnrnpul1) from Mus musculus (Mouse).